The sequence spans 272 residues: EID1-like F-box protein 3 (272 aa).

The F-box domain occupies 29–81 (SGKSGIENERVLVLVFESISWDIHTLCTIASLSRRFCAIARRILWRRLCVNRA).

This is EID1-like F-box protein 3 (EDL3) from Arabidopsis thaliana (Mouse-ear cress).